The following is a 320-amino-acid chain: MRKKKDGQNLPDFRKNPPKLDKKAYEKELKRLQAELVDLQQWVVETGARVVIVMEGRDAAGKGSAIKRITQYLNPRSARIEALPTPNSREKGQWYFQRYIEKLPTAGEIVIFDRSWYNRAGVERVMGFCTSQEYRRFLHQAPIFERLLVEDGIHLRKYWFSVSDEEQIERFEDRLSDPLRRWKLSPMDLQSITRWEDYSRAKDEMFIHTDIPSAPWYTVESEDKKRSRINVISHLLSTIPYEKIDRPLPEIPHRPDSESDYVRPPRDEFRYVPDVAAHLEEERIKKEEKAKKAKKPAKAAGKNSDKQKSSGGKGKKKSKK.

Disordered stretches follow at residues 1-21 (MRKK…PKLD), 246-267 (RPLP…PPRD), and 281-320 (EERI…KSKK). The span at 12 to 21 (DFRKNPPKLD) shows a compositional bias: basic and acidic residues. The span at 281–290 (EERIKKEEKA) shows a compositional bias: basic and acidic residues.

This sequence belongs to the polyphosphate kinase 2 (PPK2) family. Class I subfamily.

It catalyses the reaction [phosphate](n) + GTP = [phosphate](n+1) + GDP. The polypeptide is Putative GDP-polyphosphate phosphotransferase PKK2A (Corynebacterium glutamicum (strain ATCC 13032 / DSM 20300 / JCM 1318 / BCRC 11384 / CCUG 27702 / LMG 3730 / NBRC 12168 / NCIMB 10025 / NRRL B-2784 / 534)).